The following is a 66-amino-acid chain: UPF0434 protein Nwi_0075 (66 aa).

Belongs to the UPF0434 family.

This Nitrobacter winogradskyi (strain ATCC 25391 / DSM 10237 / CIP 104748 / NCIMB 11846 / Nb-255) protein is UPF0434 protein Nwi_0075.